Consider the following 508-residue polypeptide: Probable malate:quinone oxidoreductase (508 aa).

Belongs to the MQO family. FAD is required as a cofactor.

It carries out the reaction (S)-malate + a quinone = a quinol + oxaloacetate. The protein operates within carbohydrate metabolism; tricarboxylic acid cycle; oxaloacetate from (S)-malate (quinone route): step 1/1. This is Probable malate:quinone oxidoreductase from Chromohalobacter salexigens (strain ATCC BAA-138 / DSM 3043 / CIP 106854 / NCIMB 13768 / 1H11).